We begin with the raw amino-acid sequence, 475 residues long: UDP-glucosyltransferase UGT13248 (475 aa).

Residues 1-17 (METTVTAVSGTTSSSVG) show a composition bias toward low complexity. The interval 1-20 (METTVTAVSGTTSSSVGHGA) is disordered. UDP-alpha-D-glucose is bound by residues histidine 38, serine 152, threonine 299, cysteine 352, 369 to 377 (HCGWNSTLE), and 393 to 394 (DQ).

This sequence belongs to the UDP-glycosyltransferase family.

Its function is as follows. Involved in the detoxification of the Fusarium mycotoxin deoxynivalenol by the transfer of glucose from UDP-D-glucose to the hydroxyl group at C-3, forming deoxynivalenol-3-O-beta-D-glucoside. In Hordeum vulgare subsp. vulgare (Domesticated barley), this protein is UDP-glucosyltransferase UGT13248.